Consider the following 583-residue polypeptide: Aspartate--tRNA ligase (583 aa).

Glu-169 serves as a coordination point for L-aspartate. The interval 193 to 196 (QLFK) is aspartate. Arg-215 provides a ligand contact to L-aspartate. Residues 215-217 (RDE) and Gln-224 each bind ATP. L-aspartate is bound at residue His-443. Glu-477 contributes to the ATP binding site. Arg-484 provides a ligand contact to L-aspartate. 529-532 (GIDR) lines the ATP pocket.

The protein belongs to the class-II aminoacyl-tRNA synthetase family. Type 1 subfamily. In terms of assembly, homodimer.

It localises to the cytoplasm. The enzyme catalyses tRNA(Asp) + L-aspartate + ATP = L-aspartyl-tRNA(Asp) + AMP + diphosphate. Functionally, catalyzes the attachment of L-aspartate to tRNA(Asp) in a two-step reaction: L-aspartate is first activated by ATP to form Asp-AMP and then transferred to the acceptor end of tRNA(Asp). In Stenotrophomonas maltophilia (strain R551-3), this protein is Aspartate--tRNA ligase.